Reading from the N-terminus, the 132-residue chain is Gonadotropin subunit beta-1 (132 aa).

The N-terminal stretch at 1–17 (MMRGVTMVLLLPMLVWA) is a signal peptide. 5 disulfides stabilise this stretch: cysteine 25/cysteine 73, cysteine 39/cysteine 88, cysteine 50/cysteine 104, cysteine 54/cysteine 106, and cysteine 109/cysteine 116. N-linked (GlcNAc...) asparagine glycans are attached at residues asparagine 29 and asparagine 46.

This sequence belongs to the glycoprotein hormones subunit beta family. Heterodimer of an alpha and a beta chain.

It localises to the secreted. In terms of biological role, involved in gametogenesis and steroidogenesis. This Ictalurus punctatus (Channel catfish) protein is Gonadotropin subunit beta-1 (cgba).